The primary structure comprises 459 residues: Arginine biosynthesis bifunctional protein ArgJ, mitochondrial (459 aa).

Substrate is bound by residues Thr-187, Lys-216, Thr-227, Glu-314, Asn-454, and Thr-459. Catalysis depends on Thr-227, which acts as the Nucleophile.

This sequence belongs to the ArgJ family. In terms of assembly, heterodimer of an alpha and a beta chain. In terms of processing, the alpha and beta chains are autoproteolytically processed from a single precursor protein within the mitochondrion.

The protein resides in the mitochondrion matrix. It carries out the reaction N(2)-acetyl-L-ornithine + L-glutamate = N-acetyl-L-glutamate + L-ornithine. The catalysed reaction is L-glutamate + acetyl-CoA = N-acetyl-L-glutamate + CoA + H(+). Its pathway is amino-acid biosynthesis; L-arginine biosynthesis; L-ornithine and N-acetyl-L-glutamate from L-glutamate and N(2)-acetyl-L-ornithine (cyclic): step 1/1. The protein operates within amino-acid biosynthesis; L-arginine biosynthesis; N(2)-acetyl-L-ornithine from L-glutamate: step 1/4. In terms of biological role, catalyzes two activities which are involved in the cyclic version of arginine biosynthesis: the synthesis of acetylglutamate from glutamate and acetyl-CoA, and of ornithine by transacetylation between acetylornithine and glutamate. In Uncinocarpus reesii (strain UAMH 1704), this protein is Arginine biosynthesis bifunctional protein ArgJ, mitochondrial.